The following is a 121-amino-acid chain: Neuromedin-B (121 aa).

Positions 1 to 24 (MTLRAVGVRLLGGLLLFALLAAGA) are cleaved as a signal peptide. Methionine amide is present on Met56. Residues 60–121 (SLEPPSPSLL…RRLLVQTLQK (62 aa)) constitute a propeptide that is removed on maturation. Residues 61 to 80 (LEPPSPSLLGTAPHTSLRDQ) form a disordered region.

The protein belongs to the bombesin/neuromedin-B/ranatensin family.

It is found in the secreted. It localises to the cell projection. The protein localises to the neuron projection. In terms of biological role, stimulates smooth muscle contraction. Induces sighing by acting directly on the pre-Botzinger complex, a cluster of several thousand neurons in the ventrolateral medulla responsible for inspiration during respiratory activity. Contributes to the induction of sneezing following exposure to chemical irritants or allergens which causes release of NMB by nasal sensory neurons and activation of NMBR-expressing neurons in the sneeze-evoking region of the brainstem. These in turn activate neurons of the caudal ventral respiratory group, giving rise to the sneezing response. Contributes to induction of acute itch, possibly through activation of the NMBR receptor on dorsal root ganglion neurons. Increases expression of NMBR and steroidogenic mediators STAR, CYP11A1 and HSD3B1 in Leydig cells, induces secretion of testosterone by Leydig cells and also promotes Leydig cell proliferation. Plays a role in the innate immune response to influenza A virus infection by enhancing interferon alpha expression and reducing expression of IL6. Plays a role in CSF1-induced proliferation of osteoclast precursors by contributing to the positive regulation of the expression of the CSF1 receptor CSF1R. This is Neuromedin-B (NMB) from Bos taurus (Bovine).